The sequence spans 178 residues: MSEVSCKKRDDYLEWPEYFMAVAFLSAQRSKDPNSQVGACIVNSENKIVGIGYNGMPNGCSDDQLPWRRTAKNKLDTKYPYVCHAELNAIMNKNSTDVKGCSMYVALFPCNECAKLIIQAGIKEVIFMSDKYHDSDEATAARLLFDMAGVTFRKFIPKCSKIVIDFDSINSRPSQKLQ.

The 133-residue stretch at 14-146 folds into the CMP/dCMP-type deaminase domain; the sequence is EWPEYFMAVA…EATAARLLFD (133 aa). A Zn(2+)-binding site is contributed by His84. Glu86 (proton donor) is an active-site residue. Positions 110 and 113 each coordinate Zn(2+). Ser174 is subject to Phosphoserine.

The protein belongs to the cytidine and deoxycytidylate deaminase family. As to quaternary structure, homohexamer. It depends on Zn(2+) as a cofactor.

It carries out the reaction dCMP + H2O + H(+) = dUMP + NH4(+). The enzyme catalyses 5-hydroxymethyl-dCMP + H2O + H(+) = 5-hydroxymethyl-dUMP + NH4(+). Allosteric enzyme whose activity is greatly influenced by the end products of its metabolic pathway, dCTP and dTTP. Functionally, catalyzes the deamination of dCMP to dUMP, providing the nucleoside monophosphate substrate for the thymidylate synthase/TYMS. Also, part of a nucleotide salvage pathway that eliminates epigenetically modified 5-hydroxymethyl-dCMP (hmdCMP) in a two-step process entailing deamination to cytotoxic 5-hydroxymethyl-dUMP (hmdUMP), followed by its hydrolysis into 5-hydroxymethyluracil (hmU) and 2-deoxy-D-ribose 5-phosphate (deoxyribosephosphate). Catalyzes the first step in that pathway, the deamination of 5-hydroxymethyl-dCMP (hmdCMP). This Pongo abelii (Sumatran orangutan) protein is Deoxycytidylate deaminase.